We begin with the raw amino-acid sequence, 84 residues long: MSEFWLCFNCCIAEQPQPKRRRRIDRSMIGEPTNFVHTAHVGSGDLFSGMNSVSSIQNQMQSKGGYEGNISSNVQMQLVDTKAG.

Residues cysteine 10 and cysteine 11 are each lipidated (S-palmitoyl cysteine). One can recognise a CRIB domain in the interval 29–42 (IGEPTNFVHTAHVG).

It belongs to the CDC42SE/SPEC family.

The protein resides in the cytoplasm. It is found in the cytoskeleton. Its subcellular location is the cell membrane. In terms of biological role, probably involved in the organization of the actin cytoskeleton by acting downstream of CDC42, inducing actin filament assembly. The polypeptide is CDC42 small effector protein 2-A (cdc42se2-a) (Xenopus laevis (African clawed frog)).